Here is a 608-residue protein sequence, read N- to C-terminus: Putative pentatricopeptide repeat-containing protein At1g16830 (608 aa).

PPR repeat units follow at residues 107 to 141 (KPRVFLLLLEIFWRGHIYDKAIEVYTGMSSFGFVP), 142 to 172 (NTRAMNMMMDVNFKLNVVNGALEIFEGIRFR), 173 to 210 (NFFSFDIALSHFCSRGGRGDLVGVKIVLKRMIGEGFYP), 211 to 245 (NRERFGQILRLCCRTGCVSEAFQVVGLMICSGISV), 246 to 280 (SVNVWSMLVSGFFRSGEPQKAVDLFNKMIQIGCSP), 281 to 315 (NLVTYTSLIKGFVDLGMVDEAFTVLSKVQSEGLAP), 316 to 350 (DIVLCNLMIHTYTRLGRFEEARKVFTSLEKRKLVP), 351 to 381 (DQYTFASILSSLCLSGKFDLVPRITHGIGTD), 383 to 417 (DLVTGNLLSNCFSKIGYNSYALKVLSIMSYKDFAL), 418 to 452 (DCYTYTVYLSALCRGGAPRAAIKMYKIIIKEKKHL), 453 to 487 (DAHFHSAIIDSLIELGKYNTAVHLFKRCILEKYPL), 488 to 522 (DVVSYTVAIKGLVRAKRIEEAYSLCCDMKEGGIYP), and 523 to 557 (NRRTYRTIISGLCKEKETEKVRKILRECIQEGVEL).

The protein belongs to the PPR family. P subfamily.

This Arabidopsis thaliana (Mouse-ear cress) protein is Putative pentatricopeptide repeat-containing protein At1g16830.